Here is a 961-residue protein sequence, read N- to C-terminus: Aconitate hydratase A (961 aa).

The [4Fe-4S] cluster site is built by Cys-499, Cys-565, and Cys-568.

The protein belongs to the aconitase/IPM isomerase family. As to quaternary structure, monomer. It depends on [4Fe-4S] cluster as a cofactor.

It catalyses the reaction citrate = D-threo-isocitrate. The enzyme catalyses (2S,3R)-3-hydroxybutane-1,2,3-tricarboxylate = 2-methyl-cis-aconitate + H2O. Its pathway is carbohydrate metabolism; tricarboxylic acid cycle; isocitrate from oxaloacetate: step 2/2. It participates in organic acid metabolism; propanoate degradation. Functionally, involved in the catabolism of short chain fatty acids (SCFA) via the tricarboxylic acid (TCA)(acetyl degradation route) and probably via the 2-methylcitrate cycle I (propionate degradation route). Catalyzes the reversible isomerization of citrate to isocitrate via cis-aconitate. The apo form of AcnA functions as a RNA-binding regulatory protein. Could catalyze the hydration of 2-methyl-cis-aconitate to yield (2R,3S)-2-methylisocitrate. This Mycobacterium avium protein is Aconitate hydratase A (acn).